Here is a 146-residue protein sequence, read N- to C-terminus: Hemoglobin subunit beta-1 (146 aa).

In terms of domain architecture, Globin spans 2-146; the sequence is HWTAEEKQLI…VSHSLARRYH (145 aa). Residues His63 and His92 each contribute to the heme b site.

The protein belongs to the globin family. As to quaternary structure, the major hemoglobin component (HbIII) is a tetramer of two alpha-2 chains and two beta-1 chains. As to expression, red blood cells.

Functionally, involved in oxygen transport from the lung to the various peripheral tissues. This chain is Hemoglobin subunit beta-1 (HBB1), found in Varanus albigularis (White-throated monitor).